Here is a 1007-residue protein sequence, read N- to C-terminus: SUPPRESSOR OF ABI3-5 (1007 aa).

Disordered regions lie at residues 1-185 and 204-269; these read MDPS…RDRE and ESPH…FSAT. Composition is skewed to basic and acidic residues over residues 40–49, 94–120, 138–185, and 204–214; these read PDERLMRDDV, YYHD…RYDG, HSRD…RDRE, and ESPHKRYEKSR. The segment covering 227–236 has biased composition (basic residues); sequence RSPRGRSHGR. Residues 237 to 264 are compositionally biased toward basic and acidic residues; that stretch reads SYREDSYEGDHWNESERRREYEDRHNQD. One can recognise an RRM 1 domain in the interval 272-352; sequence ATVVVKGLSM…RKLMFHYSQP (81 aa). The RanBP2-type zinc-finger motif lies at 378–407; the sequence is VPTDWICTICGCINFARRTSCFQCNEPKTK. In terms of domain architecture, RRM 2 spans 432–512; it reads HVLVVRGLDE…KILRVAYAKS (81 aa). Disordered regions lie at residues 556-581, 631-656, 725-755, 771-797, 810-910, and 945-977; these read GEKQ…SAPQ, PDQN…SQQK, HETQ…STGQ, STSN…TLMG, ASSS…GITT, and SGLG…KKVD. Polar residues predominate over residues 631–645; that stretch reads PDQNNESKVTENQPD. Low complexity-rich tracts occupy residues 778–793 and 823–835; these read SALT…TTGG and PSAS…VSGS. Positions 849–867 are enriched in basic and acidic residues; sequence THREQPQTSYRDRAAERRN. Residues 928–974 form the G-patch domain; that stretch reads ESNVGNRMLRNMGWHEGSGLGKDGSGMKEPVQAQGVDRRAGLGSQQK.

As to quaternary structure, interacts with the pre-spliceosomal component U2AF65A. In terms of tissue distribution, ubiquitous with highest expression in siliques toward the end of seed maturation.

Its subcellular location is the nucleus. Functionally, splicing factor that controls alternative splicing of the developmental regulator ABI3. Reduces splicing of a cryptic intron in ABI3, leading to a decreased in ABI3-beta transcript. Regulates the splicing of the receptor-like kinase SNC4/LRKL-2.6. This Arabidopsis thaliana (Mouse-ear cress) protein is SUPPRESSOR OF ABI3-5.